The following is a 273-amino-acid chain: DnaJ homolog subfamily C member 27 (273 aa).

Residues Gly-23–Ser-30, Asp-71–His-75, and Asn-134–Asp-137 contribute to the GTP site. Positions Asp-217 to Lys-273 constitute a J domain.

Belongs to the small GTPase superfamily. Rab family.

It localises to the nucleus. GTPase possibly involved in regulation of the MEK/ERK pathway. The polypeptide is DnaJ homolog subfamily C member 27 (DNAJC27) (Gallus gallus (Chicken)).